The sequence spans 457 residues: Multidrug resistance protein MdtK (457 aa).

Topologically, residues 1–10 (MQKYISEARL) are cytoplasmic. A helical membrane pass occupies residues 11–31 (LLALAIPVILAQIAQTAMGFV). The Periplasmic portion of the chain corresponds to 32–52 (DTVMAGGYSATDMAAVAIGTS). A helical transmembrane segment spans residues 53–73 (IWLPAILFGHGLLLALTPVIA). At 74-92 (QLNGSGRRERIAHQVRQGF) the chain is on the cytoplasmic side. The chain crosses the membrane as a helical span at residues 93–113 (WLAGFVSVLIMLVLWNAGYII). Residues 114-126 (RSMENIDPALADK) are Periplasmic-facing. The helical transmembrane segment at 127-147 (AVGYLRALLWGAPGYLFFQVA) threads the bilayer. Residues 148-159 (RNQCEGLAKTKP) lie on the Cytoplasmic side of the membrane. Residues 160 to 180 (GMVMGFIGLLVNIPVNYIFIY) form a helical membrane-spanning segment. Residues 181-191 (GHFGMPELSGV) are Periplasmic-facing. A helical transmembrane segment spans residues 192–212 (GCGVATAAVYWAMFLAMVSYI). The Cytoplasmic segment spans residues 213 to 242 (KRARSMRDIRNEKGTAKPDPAVMKRLIQLG). A helical membrane pass occupies residues 243-263 (LPIALALFFEVTLFAVVALLV). At 264–275 (SPLGIVDVAGHQ) the chain is on the periplasmic side. Residues 276–296 (IALNFSSLMFVLPMSLAAAVT) form a helical membrane-spanning segment. At 297–313 (IRVGYRLGQGSTLDAQT) the chain is on the cytoplasmic side. The chain crosses the membrane as a helical span at residues 314–334 (AARTGLMVGVCMATLTAIFTV). Residues 335–349 (SLREQIALLYNDNPE) lie on the Periplasmic side of the membrane. The chain crosses the membrane as a helical span at residues 350–370 (VVTLAAHLMLLAAVYQISDSI). The Cytoplasmic segment spans residues 371 to 386 (QVIGSGILRGYKDTRS). A helical membrane pass occupies residues 387-407 (IFYITFTAYWVLGLPSGYILA). At 408-417 (LTDLVVEPMG) the chain is on the periplasmic side. The helical transmembrane segment at 418–438 (PAGFWIGFIIGLTSAAIMMML) threads the bilayer. Residues 439 to 457 (RMRFLQRLPSAIILQRASR) lie on the Cytoplasmic side of the membrane.

Belongs to the multi antimicrobial extrusion (MATE) (TC 2.A.66.1) family. MdtK subfamily.

It localises to the cell inner membrane. Functionally, multidrug efflux pump that functions probably as a Na(+)/drug antiporter. This is Multidrug resistance protein MdtK from Shigella dysenteriae serotype 1 (strain Sd197).